The following is a 343-amino-acid chain: 3-dehydroquinate synthase (343 aa).

NAD(+) is bound by residues 86–90 (GALLD), 110–111 (TT), K123, and K132. Residues E165, H229, and H243 each coordinate Zn(2+).

Belongs to the sugar phosphate cyclases superfamily. Dehydroquinate synthase family. Co(2+) is required as a cofactor. It depends on Zn(2+) as a cofactor. The cofactor is NAD(+).

Its subcellular location is the cytoplasm. It carries out the reaction 7-phospho-2-dehydro-3-deoxy-D-arabino-heptonate = 3-dehydroquinate + phosphate. It functions in the pathway metabolic intermediate biosynthesis; chorismate biosynthesis; chorismate from D-erythrose 4-phosphate and phosphoenolpyruvate: step 2/7. In terms of biological role, catalyzes the conversion of 3-deoxy-D-arabino-heptulosonate 7-phosphate (DAHP) to dehydroquinate (DHQ). This Pyrobaculum neutrophilum (strain DSM 2338 / JCM 9278 / NBRC 100436 / V24Sta) (Thermoproteus neutrophilus) protein is 3-dehydroquinate synthase.